A 359-amino-acid chain; its full sequence is Guanine nucleotide-binding protein G(q) subunit alpha (359 aa).

S-palmitoyl cysteine attachment occurs at residues Cys9 and Cys10. Residues 38 to 359 (RELKLLLLGT…QLNLKEYNLV (322 aa)) form the G-alpha domain. Residues 41 to 54 (KLLLLGTGESGKST) form a G1 motif region. Residues Ser50, Gly51, Lys52, Ser53, Thr54, Ser156, Leu180, Arg181, and Arg183 each coordinate GTP. Position 53 (Ser53) interacts with Mg(2+). Residues 178 to 186 (DVLRVRVPT) form a G2 motif region. Thr186 serves as a coordination point for Mg(2+). Residues 201–210 (FRMVDVGGQR) form a G3 motif region. 5-glutamyl histamine is present on Gln209. A G4 motif region spans residues 270–277 (ILFLNKKD). 4 residues coordinate GTP: Asn274, Lys275, Asp277, and Ala331. The segment at 329 to 334 (TCATDT) is G5 motif.

Belongs to the G-alpha family. G(q) subfamily. G proteins are composed of 3 units; alpha, beta and gamma. The alpha chain contains the guanine nucleotide binding site. Interacts (GDP-bound form) with RIC8A (via C-terminus); promoting GNAQ folding and association with the plasma membrane. Binds NHERF1. Forms a complex with PECAM1 and BDKRB2. Interacts with GAS2L2. In terms of processing, palmitoylated by ZDHHC3 and ZDHHC7. Palmitoylation occurs in the Golgi and participates in the localization of GNAQ to the plasma membrane. Post-translationally, histaminylated at Gln-209 residues by TGM2.

The protein resides in the cell membrane. It localises to the golgi apparatus. It is found in the nucleus. Its subcellular location is the nucleus membrane. It carries out the reaction GTP + H2O = GDP + phosphate + H(+). Guanine nucleotide-binding proteins (G proteins) function as transducers downstream of G protein-coupled receptors (GPCRs) in numerous signaling cascades. The alpha chain contains the guanine nucleotide binding site and alternates between an active, GTP-bound state and an inactive, GDP-bound state. Signaling by an activated GPCR promotes GDP release and GTP binding. The alpha subunit has a low GTPase activity that converts bound GTP to GDP, thereby terminating the signal. Both GDP release and GTP hydrolysis are modulated by numerous regulatory proteins. Signaling is mediated via phospholipase C-beta-dependent inositol lipid hydrolysis for signal propagation: activates phospholipase C-beta: following GPCR activation, GNAQ activates PLC-beta (PLCB1, PLCB2, PLCB3 or PLCB4), leading to production of diacylglycerol (DAG) and inositol 1,4,5-trisphosphate (IP3). Required for platelet activation. Regulates B-cell selection and survival and is required to prevent B-cell-dependent autoimmunity. Regulates chemotaxis of BM-derived neutrophils and dendritic cells (in vitro). Transduces FFAR4 signaling in response to long-chain fatty acids (LCFAs). Together with GNA11, required for heart development. The sequence is that of Guanine nucleotide-binding protein G(q) subunit alpha (GNAQ) from Canis lupus familiaris (Dog).